The primary structure comprises 212 residues: Peptide methionine sulfoxide reductase MsrA (212 aa).

Residue Cys52 is part of the active site.

The protein belongs to the MsrA Met sulfoxide reductase family.

It catalyses the reaction L-methionyl-[protein] + [thioredoxin]-disulfide + H2O = L-methionyl-(S)-S-oxide-[protein] + [thioredoxin]-dithiol. It carries out the reaction [thioredoxin]-disulfide + L-methionine + H2O = L-methionine (S)-S-oxide + [thioredoxin]-dithiol. Its function is as follows. Has an important function as a repair enzyme for proteins that have been inactivated by oxidation. Catalyzes the reversible oxidation-reduction of methionine sulfoxide in proteins to methionine. This is Peptide methionine sulfoxide reductase MsrA from Cronobacter sakazakii (strain ATCC BAA-894) (Enterobacter sakazakii).